A 680-amino-acid polypeptide reads, in one-letter code: NADPH--cytochrome P450 reductase (680 aa).

Residues M1 to K5 lie on the Lumenal side of the membrane. Residues L6 to A23 form a helical membrane-spanning segment. Residues K24–W680 lie on the Cytoplasmic side of the membrane. Positions T60–F204 constitute a Flavodoxin-like domain. FMN-binding positions include S66–A71, A117–G120, L152–N161, and D187. The FAD-binding FR-type domain maps to T264–F509. NADP(+) is bound at residue R283. Residues R439–S442, T457–V459, and G473–T476 each bind FAD. NADP(+) is bound by residues T537, S599–R600, K606–Q610, and D642. W680 lines the FAD pocket.

This sequence belongs to the NADPH--cytochrome P450 reductase family. The protein in the N-terminal section; belongs to the flavodoxin family. In the C-terminal section; belongs to the flavoprotein pyridine nucleotide cytochrome reductase family. It depends on FAD as a cofactor. The cofactor is FMN.

The protein resides in the endoplasmic reticulum membrane. It localises to the mitochondrion outer membrane. Its subcellular location is the cell membrane. It catalyses the reaction 2 oxidized [cytochrome P450] + NADPH = 2 reduced [cytochrome P450] + NADP(+) + H(+). Functionally, this enzyme is required for electron transfer from NADP to cytochrome P450 in microsomes. It can also provide electron transfer to heme oxygenase and cytochrome B5. Involved in ergosterol biosynthesis. In Candida maltosa (Yeast), this protein is NADPH--cytochrome P450 reductase.